A 100-amino-acid chain; its full sequence is MVPLWWFIVLGVVLFVIGAAGVLLRRNILVVLMSLELLLNSVNINFIAFGHYYDDFRGQIFAIFVIAITAAEVAVALGILVALVRNKSTLKVDDVTMLKG.

The next 3 membrane-spanning stretches (helical) occupy residues 4–24 (LWWF…GVLL), 28–48 (ILVV…NFIA), and 60–80 (IFAI…LGIL).

The protein belongs to the complex I subunit 4L family. In terms of assembly, NDH-1 is composed of 14 different subunits. Subunits NuoA, H, J, K, L, M, N constitute the membrane sector of the complex.

Its subcellular location is the cell inner membrane. The enzyme catalyses a quinone + NADH + 5 H(+)(in) = a quinol + NAD(+) + 4 H(+)(out). Functionally, NDH-1 shuttles electrons from NADH, via FMN and iron-sulfur (Fe-S) centers, to quinones in the respiratory chain. The immediate electron acceptor for the enzyme in this species is believed to be ubiquinone. Couples the redox reaction to proton translocation (for every two electrons transferred, four hydrogen ions are translocated across the cytoplasmic membrane), and thus conserves the redox energy in a proton gradient. In Rhizobium etli (strain CIAT 652), this protein is NADH-quinone oxidoreductase subunit K 2.